Consider the following 352-residue polypeptide: Bifunctional protein FolD 1, mitochondrial (352 aa).

Residues 1–23 constitute a mitochondrion transit peptide; sequence MLMIARKALASAHTKAFRLATRD.

It belongs to the tetrahydrofolate dehydrogenase/cyclohydrolase family. As to quaternary structure, homodimer.

The protein localises to the mitochondrion. It carries out the reaction (6R)-5,10-methylene-5,6,7,8-tetrahydrofolate + NADP(+) = (6R)-5,10-methenyltetrahydrofolate + NADPH. The enzyme catalyses (6R)-5,10-methenyltetrahydrofolate + H2O = (6R)-10-formyltetrahydrofolate + H(+). The protein operates within one-carbon metabolism; tetrahydrofolate interconversion. In terms of biological role, catalyzes the oxidation of 5,10-methylenetetrahydrofolate to 5,10-methenyltetrahydrofolate and then the hydrolysis of 5,10-methenyltetrahydrofolate to 10-formyltetrahydrofolate. The protein is Bifunctional protein FolD 1, mitochondrial (FOLD1) of Arabidopsis thaliana (Mouse-ear cress).